The primary structure comprises 403 residues: S-adenosylmethionine synthase (403 aa).

His15 contributes to the ATP binding site. Asp17 provides a ligand contact to Mg(2+). Glu43 lines the K(+) pocket. Residues Glu56 and Gln99 each coordinate L-methionine. The tract at residues 99 to 109 (QSPDINQGVDR) is flexible loop. Residues 166 to 168 (DAK), 232 to 233 (KF), Asp241, 247 to 248 (RK), Ala264, and Lys268 contribute to the ATP site. Asp241 contacts L-methionine. Lys272 lines the L-methionine pocket.

This sequence belongs to the AdoMet synthase family. In terms of assembly, homotetramer; dimer of dimers. It depends on Mg(2+) as a cofactor. K(+) is required as a cofactor.

It localises to the cytoplasm. It carries out the reaction L-methionine + ATP + H2O = S-adenosyl-L-methionine + phosphate + diphosphate. The protein operates within amino-acid biosynthesis; S-adenosyl-L-methionine biosynthesis; S-adenosyl-L-methionine from L-methionine: step 1/1. Its function is as follows. Catalyzes the formation of S-adenosylmethionine (AdoMet) from methionine and ATP. The overall synthetic reaction is composed of two sequential steps, AdoMet formation and the subsequent tripolyphosphate hydrolysis which occurs prior to release of AdoMet from the enzyme. The protein is S-adenosylmethionine synthase of Xylella fastidiosa (strain Temecula1 / ATCC 700964).